A 230-amino-acid polypeptide reads, in one-letter code: Type II restriction enzyme Eco47I (230 aa).

It carries out the reaction Endonucleolytic cleavage of DNA to give specific double-stranded fragments with terminal 5'-phosphates.. Functionally, a P subtype restriction enzyme that recognizes the double-stranded sequence 5'-GGWCC-3' and cleaves after G-1. The chain is Type II restriction enzyme Eco47I from Escherichia coli.